The primary structure comprises 101 residues: MNSKLAVALLATFLLSLTLCEAAVLTRIGTELRCQCIKTHSTPFHPKFIKELRVIESGPHCANSEIIVKLVDGRELCLDPKEKWVQKVVQIFLKRAEQQES.

An N-terminal signal peptide occupies residues 1–22 (MNSKLAVALLATFLLSLTLCEA). Arg-27 is subject to Citrulline. 2 disulfide bridges follow: Cys-34/Cys-61 and Cys-36/Cys-77.

It belongs to the intercrine alpha (chemokine CxC) family. In terms of assembly, homodimer. Interacts with TNFAIP6 (via Link domain); this interaction interferes with chemokine binding to glycosaminoglycans. In terms of processing, citrullination at Arg-27 prevents proteolysis, and dampens tissue inflammation, it also enhances leukocytosis, possibly through impaired chemokine clearance from the blood circulation.

The protein resides in the secreted. Chemotactic factor that mediates inflammatory response by attracting neutrophils, basophils, and T-cells to clear pathogens and protect the host from infection. Also plays an important role in neutrophil activation. Released in response to an inflammatory stimulus, exerts its effect by binding to the G-protein-coupled receptors CXCR1 and CXCR2, primarily found in neutrophils, monocytes and endothelial cells. G-protein heterotrimer (alpha, beta, gamma subunits) constitutively binds to CXCR1/CXCR2 receptor and activation by IL8 leads to beta and gamma subunits release from Galpha (GNAI2 in neutrophils) and activation of several downstream signaling pathways including PI3K and MAPK pathways. This Oryctolagus cuniculus (Rabbit) protein is Interleukin-8 (CXCL8).